A 324-amino-acid chain; its full sequence is Disintegrin-like/cysteine-rich protein MPIII-3 (324 aa).

The N-terminal stretch at 1-20 (MIQVLLVIICLAVFPYQVSS) is a signal peptide. Residues 21 to 173 (IILESGNINN…DEDPKKCEFR (153 aa)) constitute a propeptide, or 174 (in a minor form). The region spanning 168-207 (KKCEFRRAGTECRPARSECDVAEYCTGQSAECPTDVFHSN) is the Disintegrin; truncated domain. Positions 179–192 (CRPARSECDVAEYC) are inhibits platelet aggregation. Intrachain disulfides connect Cys179–Cys199, Cys186–Cys218, Cys192–Cys199, Cys211–Cys223, Cys230–Cys280, Cys245–Cys287, Cys258–Cys268, Cys275–Cys312, and Cys306–Cys317. Residues 185–187 (ECD) carry the D/ECD-tripeptide motif. Positions 187 and 190 each coordinate Ca(2+). Ca(2+)-binding residues include Asp202 and Val203. N-linked (GlcNAc...) asparagine glycosylation is present at Asn237.

Belongs to the venom metalloproteinase (M12B) family. P-III subfamily. P-IIIe sub-subfamily. Monomer. Is able to form a homodimer. N-glycosylated. Exists in at least six differently N-glycosylated forms. The glycans likely have a stabilizing purpose. Post-translationally, cys-199 forms a disulfide bond with Cys-192 in 90% and with Cys-179 in 10% of the protein molecules; alternative disulfide bonds may have a major effect on the conformation of the protein. As to expression, expressed by the venom gland (at protein level). Expressed by the venom gland.

The protein resides in the secreted. Activity may be regulated by the intramolecular thiol-disulfide exchange or disulfide bond switching. Abolishes platelet aggregation induced by collagen, ADP (IC(50)=292 nM) and arachidonic-acid. The inhibition of collagen-induced platelet aggregation may be due to its ability to bind collagen and block the binding site on collagen for platelets and/or to its ability to bind to the platelet alpha-2/beta-1 collagen receptor (ITGA2/ITGB1) to block its interaction with collagen and hence prevent platelet stimulation. The inhibition of ADP- or arachidonic-acid-induced platelet aggregation may be due to it acting as an antagonist of the ADP receptors or thromboxane-prostanoid receptors of the platelets, respectively. Does not interact with integrins alpha-IIb (ITGA2B) or beta-3 (ITGB3) nor platelet glycoproteins VI (GP6) or IX (GP9) in vitro, however, the detection is dependent on experimental conditions and may happen in vivo. Able to bind to platelet glycoprotein Ib alpha chain (GP1BA) receptor in vitro, although this interaction may have pathologically only limited effect in vivo as it is not able to abolish the von Willebrand factor (vWF)-dependent platelet agglutination induced by ristocetin. Does not affect blood coagulation. In Vipera ammodytes ammodytes (Western sand viper), this protein is Disintegrin-like/cysteine-rich protein MPIII-3.